The primary structure comprises 615 residues: Hypermethylated in cancer 2 protein (615 aa).

A BTB domain is found at 46-109 (CDVIIMVENS…IYTGKLLPSD (64 aa)). The tract at residues 144–167 (KPFGSGRAGSTGMGRPPRSQRLST) is disordered. Residues S166, S169, and S197 each carry the phosphoserine modification. Disordered stretches follow at residues 182–208 (RKGA…GSNQ) and 229–421 (GCSS…SGHA). A binding to CtBP region spans residues 246–250 (GLDLS). Residues 280-296 (SPPAASAPPVANSASYS) are compositionally biased toward low complexity. Residues 336–356 (KKEWGKKEPVAGSPFERREAG) are compositionally biased toward basic and acidic residues. S348 carries the phosphoserine modification. The segment covering 379–388 (ASGAGPSGPY) has biased composition (low complexity). The residue at position 412 (S412) is a Phosphoserine. C2H2-type zinc fingers lie at residues 442 to 469 (YVCI…EEEL), 505 to 532 (FKCS…LTRP), 533 to 560 (FPCN…GLKP), 561 to 588 (FACD…GEKP), and 589 to 615 (YECQ…TSPS).

Belongs to the krueppel C2H2-type zinc-finger protein family. Hic subfamily. Self-associates. Interacts with HIC1. As to expression, highest levels in cerebellum.

It is found in the nucleus. Its function is as follows. Transcriptional repressor. In Homo sapiens (Human), this protein is Hypermethylated in cancer 2 protein (HIC2).